The following is a 518-amino-acid chain: WEB family protein At2g40480 (518 aa).

2 coiled-coil regions span residues 95-141 and 188-219; these read DIKR…LQQE and DNLV…AKLT. Residues 303 to 337 form a disordered region; it reads NGESQDDDSEFCFPEPPRSPVTPRGLRIDNDFSTD. The span at 328–337 shows a compositional bias: basic and acidic residues; that stretch reads LRIDNDFSTD. Residues 344-375 adopt a coiled-coil conformation; sequence ILKKLEEATEGVKQSKQALEAALNRVEIANVK.

It belongs to the WEB family.

This Arabidopsis thaliana (Mouse-ear cress) protein is WEB family protein At2g40480.